Consider the following 303-residue polypeptide: Putative deoxyribose-phosphate aldolase (303 aa).

The active-site Proton donor/acceptor is Asp157. Residue Lys220 is the Schiff-base intermediate with acetaldehyde of the active site. Residue Lys256 is the Proton donor/acceptor of the active site.

It belongs to the DeoC/FbaB aldolase family. DeoC type 2 subfamily.

It catalyses the reaction 2-deoxy-D-ribose 5-phosphate = D-glyceraldehyde 3-phosphate + acetaldehyde. Its pathway is carbohydrate degradation; 2-deoxy-D-ribose 1-phosphate degradation; D-glyceraldehyde 3-phosphate and acetaldehyde from 2-deoxy-alpha-D-ribose 1-phosphate: step 2/2. In terms of biological role, catalyzes a reversible aldol reaction between acetaldehyde and D-glyceraldehyde 3-phosphate to generate 2-deoxy-D-ribose 5-phosphate. In Caenorhabditis elegans, this protein is Putative deoxyribose-phosphate aldolase.